The primary structure comprises 116 residues: Large ribosomal subunit protein bL17 (116 aa).

It belongs to the bacterial ribosomal protein bL17 family. As to quaternary structure, part of the 50S ribosomal subunit. Contacts protein L32.

This Helicobacter pylori (strain J99 / ATCC 700824) (Campylobacter pylori J99) protein is Large ribosomal subunit protein bL17.